Consider the following 37-residue polypeptide: Large ribosomal subunit protein bL36 (37 aa).

This sequence belongs to the bacterial ribosomal protein bL36 family.

The chain is Large ribosomal subunit protein bL36 from Deinococcus deserti (strain DSM 17065 / CIP 109153 / LMG 22923 / VCD115).